Reading from the N-terminus, the 465-residue chain is UDP-N-acetylmuramate--L-alanine ligase (465 aa).

112-118 (GTHGKTT) lines the ATP pocket.

It belongs to the MurCDEF family.

It is found in the cytoplasm. The enzyme catalyses UDP-N-acetyl-alpha-D-muramate + L-alanine + ATP = UDP-N-acetyl-alpha-D-muramoyl-L-alanine + ADP + phosphate + H(+). It functions in the pathway cell wall biogenesis; peptidoglycan biosynthesis. Cell wall formation. This is UDP-N-acetylmuramate--L-alanine ligase from Burkholderia mallei (strain NCTC 10247).